A 1161-amino-acid chain; its full sequence is Nuclear receptor-interacting protein 1 (1161 aa).

The segment at 1-416 is interaction with ZNF366; that stretch reads MTHGEELGSD…FESSTPTTID (416 aa). The short motif at 21 to 25 is the LXXLL motif 1 element; that stretch reads LEGLL. Residues 34–68 form a disordered region; the sequence is GTAINKKSAGHKEEDQNFNLSGSAFPSCQSNGPTV. Positions 50–68 are enriched in polar residues; it reads NFNLSGSAFPSCQSNGPTV. A repression domain 1 region spans residues 78–335; that stretch reads MLHLKKARLL…LNGQARALPA (258 aa). The residue at position 104 (Ser-104) is a Phosphoserine. Residue Lys-111 is modified to N6-acetyllysine; alternate. A Glycyl lysine isopeptide (Lys-Gly) (interchain with G-Cter in SUMO2); alternate cross-link involves residue Lys-111. Positions 133–137 match the LXXLL motif 2 motif; that stretch reads LASLL. N6-acetyllysine is present on Lys-158. Residue Lys-170 forms a Glycyl lysine isopeptide (Lys-Gly) (interchain with G-Cter in SUMO2) linkage. Positions 185–189 match the LXXLL motif 3 motif; it reads LKTLL. Glycyl lysine isopeptide (Lys-Gly) (interchain with G-Cter in SUMO2) cross-links involve residues Lys-195 and Lys-198. Thr-207 carries the phosphothreonine modification. Ser-218 bears the Phosphoserine mark. An LXXLL motif 4 motif is present at residues 267–271; that stretch reads LALLL. N6-acetyllysine occurs at positions 287 and 311. Ser-358 is subject to Phosphoserine. A Glycyl lysine isopeptide (Lys-Gly) (interchain with G-Cter in SUMO2) cross-link involves residue Lys-374. At Ser-380 the chain carries Phosphoserine. The short motif at 382-386 is the LXXLL motif 5 element; it reads LLHLL. The segment at 393-436 is disordered; sequence TPMNGHSQNERASSFESSTPTTIDEYSDNNPSFTDDSSGDESSY. Positions 411–701 are repression domain 2; the sequence is TPTTIDEYSD…PAGPEPGLPG (291 aa). Residues 432–473 are required for targeting to small nuclear foci; the sequence is DESSYSNCVPIDLSCKHRIEKPEAERPVSLENLTQSLLNTWD. Residues 441 to 447 carry the CTBP-binding; principal site motif; sequence PIDLSCK. An N6-acetyllysine mark is found at Lys-447 and Lys-482. Ser-488 is modified (phosphoserine). The LXXLL motif 6 motif lies at 501 to 505; sequence LLQLL. A Glycyl lysine isopeptide (Lys-Gly) (interchain with G-Cter in SUMO2) cross-link involves residue Lys-509. The span at 517-552 shows a compositional bias: polar residues; the sequence is NASPQDIHSDGTKFSPQNYTRTSVIESPSTNRTTPV. Residues 517–559 are disordered; that stretch reads NASPQDIHSDGTKFSPQNYTRTSVIESPSTNRTTPVSTPPLYT. The residue at position 519 (Ser-519) is a Phosphoserine. Lys-529 is modified (N6-acetyllysine). Phosphoserine is present on residues Ser-531, Ser-543, and Ser-565. The CTBP-binding motif lies at 566–570; the sequence is PINLS. 3 disordered regions span residues 604–623, 639–702, and 717–747; these read TKGK…AQNS, GLQS…LPGC, and LLGN…ERAA. Lys-607 carries the N6-acetyllysine modification. Residue Ser-672 is modified to Phosphoserine. The short motif at 714 to 718 is the LXXLL motif 7 element; it reads LQLLL. The span at 724–747 shows a compositional bias: basic and acidic residues; sequence GKNEKKEKTPARDEAPQEHSERAA. Residues 736–886 are repression domain 3; the sequence is DEAPQEHSER…TAVDTANHHS (151 aa). Positions 754–1161 are interaction with ZNF366; sequence VKIKSEPCDD…NALTIKKESE (408 aa). Residues Lys-757 and Lys-803 each participate in a glycyl lysine isopeptide (Lys-Gly) (interchain with G-Cter in SUMO2) cross-link. At Ser-808 the chain carries Phosphoserine. The LXXLL motif 8 motif lies at 820 to 824; that stretch reads LSRLL. The segment at 829–848 is disordered; the sequence is ESYPADEQDKSHRNSELPTL. Residues Lys-851 and Lys-902 each participate in a glycyl lysine isopeptide (Lys-Gly) (interchain with G-Cter in SUMO2) cross-link. The residue at position 932 (Lys-932) is an N6-acetyllysine; alternate. Lys-932 participates in a covalent cross-link: Glycyl lysine isopeptide (Lys-Gly) (interchain with G-Cter in SUMO2); alternate. The short motif at 937 to 941 is the LXXLL motif 9 element; that stretch reads LKQLL. The CTBP-binding motif lies at 947-951; it reads VRDLS. The span at 950-962 shows a compositional bias: basic and acidic residues; the sequence is LSPHRSDSVPDTK. A disordered region spans residues 950-976; the sequence is LSPHRSDSVPDTKKKGHKNNAPGSKPE. Ser-1003 carries the phosphoserine modification. The ligand-dependent nuclear receptor binding stretch occupies residues 1063–1076; sequence LTKTNPILYYMLQK. Glycyl lysine isopeptide (Lys-Gly) (interchain with G-Cter in SUMO2) cross-links involve residues Lys-1108, Lys-1118, and Lys-1157. The repression domain 4 stretch occupies residues 1121–1161; that stretch reads FFNLRSPYNSHMGNNASRPHSTNGEVYGLLGNALTIKKESE.

As to quaternary structure, interacts with CTBP1, CTBP2, ERS1, HDAC1, HDAC2, HDAC5, HDAC6, NR2C2, NR3C1, NR3C2, YWHAH, JUN and FOS. Found in a complex with both NR3C1 and YWHAH. Interacts with NR2C1 (sumoylated form and via the ligand-binding domain); the interaction results in promoting the repressor activity of NR2C1. Interacts with RARA and RXRB homodimers and RARA/RXRB heterodimers in the presence of ligand. Interacts with HDAC1 and HDAC3 via its N-terminal domain. Interacts with ZNF366. Interacts with RORA. Post-translationally, acetylation abolishes interaction with CTBP1. Phosphorylation enhances interaction with YWHAH. Acetylation regulates its nuclear translocation and corepressive activity. In terms of tissue distribution, expressed in the embryonic placenta. In the adult, expression is strong in the testis and brain. Also expressed at a high level in the white adipose tissue. Expressed constantly but at a weaker level in the adult heart, lung, stomach and kidney. Expressed moderately in the skeletal muscle. Expressed at a low level in the adult spleen, liver and brown adipose tissue. Expressed in the ovary at a high level in granulosa cells and at a lower level in the thecal and interstitial compartments.

Its subcellular location is the nucleus. Functionally, modulates transcriptional repression by nuclear hormone receptors such as NR2C1, thyroid hormone receptor and retinoic acid receptor/RARA. Essential for cumulus expansion and follicle rupture during ovulation. Also controls the balance between fat accumulation and energy expenditure. Positive regulator of the circadian clock gene expression: stimulates transcription of BMAL1, CLOCK and CRY1 by acting as a coactivator for RORA and RORC. Involved in the regulation of ovarian function. Plays a role in renal development. This chain is Nuclear receptor-interacting protein 1, found in Mus musculus (Mouse).